The primary structure comprises 169 residues: Peptide methionine sulfoxide reductase MsrA 1 (169 aa).

Cys12 is a catalytic residue.

This sequence belongs to the MsrA Met sulfoxide reductase family.

The catalysed reaction is L-methionyl-[protein] + [thioredoxin]-disulfide + H2O = L-methionyl-(S)-S-oxide-[protein] + [thioredoxin]-dithiol. The enzyme catalyses [thioredoxin]-disulfide + L-methionine + H2O = L-methionine (S)-S-oxide + [thioredoxin]-dithiol. Has an important function as a repair enzyme for proteins that have been inactivated by oxidation. Catalyzes the reversible oxidation-reduction of methionine sulfoxide in proteins to methionine. This is Peptide methionine sulfoxide reductase MsrA 1 (msrA1) from Staphylococcus aureus (strain Mu50 / ATCC 700699).